Consider the following 185-residue polypeptide: Translation initiation factor IF-3 (185 aa).

The protein belongs to the IF-3 family. Monomer.

The protein localises to the cytoplasm. IF-3 binds to the 30S ribosomal subunit and shifts the equilibrium between 70S ribosomes and their 50S and 30S subunits in favor of the free subunits, thus enhancing the availability of 30S subunits on which protein synthesis initiation begins. The chain is Translation initiation factor IF-3 from Coxiella burnetii (strain RSA 493 / Nine Mile phase I).